The chain runs to 433 residues: Enolase (433 aa).

A (2R)-2-phosphoglycerate-binding site is contributed by glutamine 167. Glutamate 209 acts as the Proton donor in catalysis. Mg(2+) contacts are provided by aspartate 246, glutamate 291, and aspartate 318. (2R)-2-phosphoglycerate-binding residues include lysine 343, arginine 372, serine 373, and lysine 394. The active-site Proton acceptor is lysine 343.

Belongs to the enolase family. As to quaternary structure, component of the RNA degradosome, a multiprotein complex involved in RNA processing and mRNA degradation. It depends on Mg(2+) as a cofactor.

It is found in the cytoplasm. The protein resides in the secreted. It localises to the cell surface. It carries out the reaction (2R)-2-phosphoglycerate = phosphoenolpyruvate + H2O. It participates in carbohydrate degradation; glycolysis; pyruvate from D-glyceraldehyde 3-phosphate: step 4/5. Its function is as follows. Catalyzes the reversible conversion of 2-phosphoglycerate (2-PG) into phosphoenolpyruvate (PEP). It is essential for the degradation of carbohydrates via glycolysis. This Hamiltonella defensa subsp. Acyrthosiphon pisum (strain 5AT) protein is Enolase.